We begin with the raw amino-acid sequence, 122 residues long: Large ribosomal subunit protein uL14 (122 aa).

It belongs to the universal ribosomal protein uL14 family. As to quaternary structure, part of the 50S ribosomal subunit. Forms a cluster with proteins L3 and L19. In the 70S ribosome, L14 and L19 interact and together make contacts with the 16S rRNA in bridges B5 and B8.

Its function is as follows. Binds to 23S rRNA. Forms part of two intersubunit bridges in the 70S ribosome. This Polaromonas naphthalenivorans (strain CJ2) protein is Large ribosomal subunit protein uL14.